The primary structure comprises 88 residues: Small ribosomal subunit protein bS20 (88 aa).

Disordered regions lie at residues 1 to 25 (MANSPQAKKRARQNERRFAINKARR) and 61 to 88 (GVTKGVMHKNTAARKMSRLSSRVKALGA).

It belongs to the bacterial ribosomal protein bS20 family.

In terms of biological role, binds directly to 16S ribosomal RNA. The polypeptide is Small ribosomal subunit protein bS20 (Jannaschia sp. (strain CCS1)).